Consider the following 67-residue polypeptide: Conotoxin TsMMSK-011 (67 aa).

The signal sequence occupies residues 1-20 (MMSKLGVLLTICLLLFPLTA). The propeptide occupies 21 to 50 (VQLDGDQPADLPALRTQDISTDHSPWFDPV). Cystine bridges form between Cys-53/Cys-65, Cys-54/Cys-61, and Cys-58/Cys-64. 4-hydroxyproline is present on Pro-63.

This sequence belongs to the conotoxin M superfamily. As to expression, expressed by the venom duct.

It is found in the secreted. In Conus tessulatus (Tessellate cone), this protein is Conotoxin TsMMSK-011.